Here is a 335-residue protein sequence, read N- to C-terminus: Proline-rich protein 1 (335 aa).

A signal peptide spans 1–22; it reads MAITRASFAICILLSLATIATA. 39 tandem repeats follow at residues 30–34, 35–39, 40–43, 44–48, 49–53, 54–57, 58–62, 63–67, 68–71, 72–76, 77–81, 82–86, 87–91, 92–96, 97–101, 102–106, 107–110, 111–115, 116–120, 121–125, 126–130, 131–135, 136–139, 140–144, 145–148, 149–153, 154–158, 159–163, 164–167, 168–172, 173–177, 178–182, 184–189, 190–194, 195–200, 201–207, 208–212, 284–288, and 319–323. The interval 30-323 is 39 X 5 AA approximate repeats; sequence PPVYTSPVNK…LFNVGPFYFT (294 aa).

The protein belongs to the plant proline-rich protein superfamily. ENOD12 family. Exclusively expressed in roots, especially in root hairs.

Its subcellular location is the secreted. It localises to the cell wall. May contribute to cell wall structure in root hairs. The chain is Proline-rich protein 1 (PRP1) from Arabidopsis thaliana (Mouse-ear cress).